The primary structure comprises 122 residues: Small ribosomal subunit protein uS13 (122 aa).

A disordered region spans residues 93–122 (RRGLPVRGQKTKTNARTRKGPKKTMANKKK).

This sequence belongs to the universal ribosomal protein uS13 family. In terms of assembly, part of the 30S ribosomal subunit. Forms a loose heterodimer with protein S19. Forms two bridges to the 50S subunit in the 70S ribosome.

Functionally, located at the top of the head of the 30S subunit, it contacts several helices of the 16S rRNA. In the 70S ribosome it contacts the 23S rRNA (bridge B1a) and protein L5 of the 50S subunit (bridge B1b), connecting the 2 subunits; these bridges are implicated in subunit movement. Contacts the tRNAs in the A and P-sites. This Clostridium botulinum (strain Alaska E43 / Type E3) protein is Small ribosomal subunit protein uS13.